We begin with the raw amino-acid sequence, 366 residues long: Peptide chain release factor 1 (366 aa).

The residue at position 230 (glutamine 230) is an N5-methylglutamine. Composition is skewed to basic and acidic residues over residues 283-293 and 315-328; these read ARDAQEARDRA and VTDH…KNHP. The tract at residues 283 to 335 is disordered; it reads ARDAQEARDRAAQVGSGERSEKIRTYNYPQNRVTDHRLEGDSKNHPLDSVMAG.

Belongs to the prokaryotic/mitochondrial release factor family. Post-translationally, methylated by PrmC. Methylation increases the termination efficiency of RF1.

Its subcellular location is the cytoplasm. Its function is as follows. Peptide chain release factor 1 directs the termination of translation in response to the peptide chain termination codons UAG and UAA. This chain is Peptide chain release factor 1, found in Deinococcus deserti (strain DSM 17065 / CIP 109153 / LMG 22923 / VCD115).